The chain runs to 260 residues: UPF0246 protein Bmul_1054/BMULJ_02209 (260 aa).

This sequence belongs to the UPF0246 family.

In Burkholderia multivorans (strain ATCC 17616 / 249), this protein is UPF0246 protein Bmul_1054/BMULJ_02209.